The chain runs to 237 residues: Phosphoribosylaminoimidazole-succinocarboxamide synthase (237 aa).

Belongs to the SAICAR synthetase family.

It catalyses the reaction 5-amino-1-(5-phospho-D-ribosyl)imidazole-4-carboxylate + L-aspartate + ATP = (2S)-2-[5-amino-1-(5-phospho-beta-D-ribosyl)imidazole-4-carboxamido]succinate + ADP + phosphate + 2 H(+). The protein operates within purine metabolism; IMP biosynthesis via de novo pathway; 5-amino-1-(5-phospho-D-ribosyl)imidazole-4-carboxamide from 5-amino-1-(5-phospho-D-ribosyl)imidazole-4-carboxylate: step 1/2. This chain is Phosphoribosylaminoimidazole-succinocarboxamide synthase, found in Yersinia enterocolitica serotype O:8 / biotype 1B (strain NCTC 13174 / 8081).